Here is a 334-residue protein sequence, read N- to C-terminus: 3-keto-steroid reductase/17-beta-hydroxysteroid dehydrogenase 7 (334 aa).

Residues 1 to 229 (MRKVVLITGA…VTCPGVVMTN (229 aa)) are Extracellular-facing. 8–15 (TGASSGIG) is an NAD(+) binding site. The N-linked (GlcNAc...) asparagine glycan is linked to Asn-37. Position 171 (Ser-171) interacts with substrate. An N-linked (GlcNAc...) asparagine glycan is attached at Asn-178. Tyr-193 serves as the catalytic Proton acceptor. Residue Asn-229 is glycosylated (N-linked (GlcNAc...) asparagine). Residues 230-250 (LTYGILPPFVWTLLLPVIWLL) traverse the membrane as a helical segment. Residues 251–334 (RFFAHAFTVT…ITIQKSDHHS (84 aa)) are Cytoplasmic-facing.

This sequence belongs to the short-chain dehydrogenases/reductases (SDR) family. ERG27 subfamily. Binds to the short form of prolactin receptor. In terms of processing, phosphorylated. As to expression, most abundant in ovaries of pregnant animals.

The protein localises to the endoplasmic reticulum membrane. It carries out the reaction 17beta-estradiol + NADP(+) = estrone + NADPH + H(+). It catalyses the reaction a 3beta-hydroxysteroid + NADP(+) = a 3-oxosteroid + NADPH + H(+). The enzyme catalyses 4alpha-methyl-5alpha-cholest-7-en-3beta-ol + NADP(+) = 4alpha-methyl-5alpha-cholest-7-en-3-one + NADPH + H(+). The catalysed reaction is 4alpha-methyl-5alpha-cholest-8-en-3-one + NADPH + H(+) = 4alpha-methyl-5alpha-cholest-8-en-3beta-ol + NADP(+). It carries out the reaction 3-dehydro-4alpha-methylzymosterol + NADPH + H(+) = 4alpha-methylzymosterol + NADP(+). It catalyses the reaction zymosterone + NADPH + H(+) = zymosterol + NADP(+). The enzyme catalyses 5alpha-cholest-8-en-3-one + NADPH + H(+) = 5alpha-cholest-8-en-3beta-ol + NADP(+). The catalysed reaction is 5alpha-androstane-3beta,17beta-diol + NADP(+) = 17beta-hydroxy-5alpha-androstan-3-one + NADPH + H(+). It carries out the reaction 5alpha-androstane-3alpha,17beta-diol + NADP(+) = 17beta-hydroxy-5alpha-androstan-3-one + NADPH + H(+). It participates in steroid biosynthesis; estrogen biosynthesis. It functions in the pathway steroid biosynthesis; zymosterol biosynthesis; zymosterol from lanosterol: step 5/6. Its function is as follows. Bifunctional enzyme involved in steroid-hormone metabolism and cholesterol biosynthesis. Catalyzes the NADP(H)-dependent reduction of estrogens and androgens and regulates the biological potency of these steroids. Converts estrone (E1) to a more potent estrogen, 17beta-estradiol (E2). Converts dihydrotestosterone (DHT) to an inactive form. Also participates in the post-squalene cholesterol biosynthesis, as a 3-ketosteroid reductase. This is 3-keto-steroid reductase/17-beta-hydroxysteroid dehydrogenase 7 (Hsd17b7) from Rattus norvegicus (Rat).